The following is a 394-amino-acid chain: MSREMQDVDLAEVKPLVEKGETITGLLQEFDVQEQDIETLHGSVHVTLCGTPKGNRPVILTYHDIGMNHKTCYNPLFNYEDMQEITQHFAVCHVDAPGQQDGAASFPAGYMYPSMDQLAEMLPGVLQQFGLKSIIGMGTGAGAYILTRFALNNPEMVEGLVLINVNPCAEGWMDWAASKISGWTQALPDMVVSHLFGKEEMQSNVEVVHTYRQHIVNDMNPGNLHLFINAYNSRRDLEIERPMPGTHTVTLQCPALLVVGDSSPAVDAVVECNSKLDPTKTTLLKMADCGGLPQISQPAKLAEAFKYFVQGMGYMPSASMTRLMRSRTASGSSVTSLDGTRSRSHTSEGTRSRSHTSEGTRSRSHTSEGAHLDITPNSGAAGNSAGPKSMEVSC.

Position 2 is an N-acetylserine (Ser-2). Ser-2, Ser-319, and Ser-326 each carry phosphoserine. The disordered stretch occupies residues 325–394 (RSRTASGSSV…AGPKSMEVSC (70 aa)). The segment covering 327–339 (RTASGSSVTSLDG) has biased composition (polar residues). Thr-328 carries the phosphothreonine; by SGK1 modification. Phosphoserine; by SGK1 is present on residues Ser-330 and Ser-332. Ser-333 carries the phosphoserine modification. Thr-335 is modified (phosphothreonine). Residue Ser-336 is modified to Phosphoserine. 3 repeat units span residues 339–348 (GTRSRSHTSE), 349–358 (GTRSRSHTSE), and 359–368 (GTRSRSHTSE). The tract at residues 339–368 (GTRSRSHTSEGTRSRSHTSEGTRSRSHTSE) is 3 X 10 AA tandem repeats of G-T-R-S-R-S-H-T-S-E. The residue at position 340 (Thr-340) is a Phosphothreonine. Phosphoserine is present on Ser-342. The span at 345–371 (HTSEGTRSRSHTSEGTRSRSHTSEGAH) shows a compositional bias: basic and acidic residues. Thr-346 carries the phosphothreonine; by SGK1 modification. Ser-352 is subject to Phosphoserine. Thr-356 carries the phosphothreonine; by SGK1 modification. Ser-362 is subject to Phosphoserine. The residue at position 364 (Ser-364) is a Phosphoserine; by SGK1. Thr-366 is subject to Phosphothreonine; by SGK1. Thr-375 carries the phosphothreonine modification.

Belongs to the NDRG family. As to quaternary structure, interacts with RAB4A (membrane-bound form); the interaction involves NDRG1 in vesicular recycling of CDH1. Under stress conditions, phosphorylated in the C-terminal on many serine and threonine residues. Phosphorylated in vitro by PKA. Phosphorylation enhanced by increased intracellular cAMP levels. Homocysteine induces dephosphorylation. Phosphorylation by SGK1 is cell cycle dependent. As to expression, ubiquitous; expressed most prominently in placental membranes and prostate, kidney, small intestine, and ovary tissues. Also expressed in heart, brain, skeletal muscle, lung, liver and pancreas. Low levels in peripheral blood leukocytes and in tissues of the immune system. Expressed mainly in epithelial cells. Also found in Schwann cells of peripheral neurons. Reduced expression in adenocarcinomas compared to normal tissues. In colon, prostate and placental membranes, the cells that border the lumen show the highest expression.

It is found in the cytoplasm. The protein localises to the cytosol. Its subcellular location is the cytoskeleton. The protein resides in the microtubule organizing center. It localises to the centrosome. It is found in the nucleus. The protein localises to the cell membrane. Its function is as follows. Stress-responsive protein involved in hormone responses, cell growth, and differentiation. Acts as a tumor suppressor in many cell types. Necessary but not sufficient for p53/TP53-mediated caspase activation and apoptosis. Has a role in cell trafficking, notably of the Schwann cell, and is necessary for the maintenance and development of the peripheral nerve myelin sheath. Required for vesicular recycling of CDH1 and TF. May also function in lipid trafficking. Protects cells from spindle disruption damage. Functions in p53/TP53-dependent mitotic spindle checkpoint. Regulates microtubule dynamics and maintains euploidy. This Homo sapiens (Human) protein is Protein NDRG1 (NDRG1).